We begin with the raw amino-acid sequence, 341 residues long: ATP-dependent 6-phosphofructokinase 2 (341 aa).

ATP contacts are provided by residues glycine 10, 72 to 73 (RL), and 102 to 105 (GEGT). A Mg(2+)-binding site is contributed by glutamate 103. Residues 125–127 (TID), arginine 162, 169–171 (MGR), glutamate 222, lysine 266, and 272–275 (HVQR) contribute to the substrate site. The active-site Proton acceptor is the aspartate 127.

Belongs to the phosphofructokinase type A (PFKA) family. Mixed-substrate PFK group III subfamily. Homodimer or homotetramer. It depends on Mg(2+) as a cofactor.

It localises to the cytoplasm. It carries out the reaction beta-D-fructose 6-phosphate + ATP = beta-D-fructose 1,6-bisphosphate + ADP + H(+). It participates in carbohydrate degradation; glycolysis; D-glyceraldehyde 3-phosphate and glycerone phosphate from D-glucose: step 3/4. With respect to regulation, allosterically inhibited by phosphoenolpyruvate. Functionally, catalyzes the phosphorylation of D-fructose 6-phosphate to fructose 1,6-bisphosphate by ATP, the first committing step of glycolysis. In Streptomyces coelicolor (strain ATCC BAA-471 / A3(2) / M145), this protein is ATP-dependent 6-phosphofructokinase 2.